A 396-amino-acid chain; its full sequence is L-lactate dehydrogenase (396 aa).

The FMN hydroxy acid dehydrogenase domain occupies 1 to 380 (MIISAASDYR…TQDSLVQGLG (380 aa)). Tyr24 contacts substrate. FMN-binding residues include Ser106 and Gln127. Tyr129 is a substrate binding site. Thr155 contacts FMN. Arg164 is a binding site for substrate. Residue Lys251 coordinates FMN. The active-site Proton acceptor is His275. Arg278 provides a ligand contact to substrate. 306-330 (DSGIRNGLDVVRMIALGADTVLLGR) is a binding site for FMN.

Belongs to the FMN-dependent alpha-hydroxy acid dehydrogenase family. FMN serves as cofactor.

It is found in the cell inner membrane. The catalysed reaction is (S)-lactate + A = pyruvate + AH2. Its function is as follows. Catalyzes the conversion of L-lactate to pyruvate. Is coupled to the respiratory chain. This is L-lactate dehydrogenase from Shigella flexneri serotype 5b (strain 8401).